The following is a 678-amino-acid chain: DNA ligase (678 aa).

NAD(+)-binding positions include 32 to 36 (DSEYD), 81 to 82 (SL), and E113. The active-site N6-AMP-lysine intermediate is K115. NAD(+) is bound by residues R136, E174, K291, and K315. Residues C409, C412, C427, and C433 each contribute to the Zn(2+) site. The region spanning 596 to 678 (ASDNPFAGKT…MRLLGESSDA (83 aa)) is the BRCT domain.

The protein belongs to the NAD-dependent DNA ligase family. LigA subfamily. Mg(2+) is required as a cofactor. Requires Mn(2+) as cofactor.

The catalysed reaction is NAD(+) + (deoxyribonucleotide)n-3'-hydroxyl + 5'-phospho-(deoxyribonucleotide)m = (deoxyribonucleotide)n+m + AMP + beta-nicotinamide D-nucleotide.. Functionally, DNA ligase that catalyzes the formation of phosphodiester linkages between 5'-phosphoryl and 3'-hydroxyl groups in double-stranded DNA using NAD as a coenzyme and as the energy source for the reaction. It is essential for DNA replication and repair of damaged DNA. This chain is DNA ligase, found in Sodalis glossinidius (strain morsitans).